Consider the following 807-residue polypeptide: Sucrose synthase 1 (807 aa).

The tract at residues 272–748 (MMFNVVILSP…GLKRIYEKYT (477 aa)) is GT-B glycosyltransferase.

This sequence belongs to the glycosyltransferase 1 family. Plant sucrose synthase subfamily. In terms of assembly, forms homotetramers. In endosperm it forms both homotetramers and heterotetramers with SS2, all three possible heterotetramers are formed. Highly expressed in developing endosperm and in roots and, at lower levels, in coleoptiles and aleurone. In 3 day old roots it is detected in cap cells and along the vascular strand, starting just after the meristemic region. In 9 day old leaves it is found in the phloem. In seeds it is distributed throughout the endosperm and also found in the assimilate-unloading tissues, the nucellar projection, the vascular area and at a high concentration in the chalazal region.

The enzyme catalyses an NDP-alpha-D-glucose + D-fructose = a ribonucleoside 5'-diphosphate + sucrose + H(+). Sucrose-cleaving enzyme that provides UDP-glucose and fructose for various metabolic pathways. This Hordeum vulgare (Barley) protein is Sucrose synthase 1 (SS1).